The sequence spans 230 residues: uncharacterized protein (230 aa).

Residues 2–69 (HRLAKIISNA…KPRLWIYYKP (68 aa)) form the S4 RNA-binding domain. Aspartate 102 (nucleophile) is an active-site residue.

The protein belongs to the pseudouridine synthase RsuA family.

The catalysed reaction is a uridine in RNA = a pseudouridine in RNA. This is an uncharacterized protein from Rickettsia conorii (strain ATCC VR-613 / Malish 7).